A 113-amino-acid polypeptide reads, in one-letter code: UPF0482 protein YnfB (113 aa).

The N-terminal stretch at 1-28 (MNYTLSKRLCLTAMLTLAAVVYTTSAFA) is a signal peptide.

Belongs to the UPF0482 family.

The polypeptide is UPF0482 protein YnfB (Salmonella arizonae (strain ATCC BAA-731 / CDC346-86 / RSK2980)).